The following is a 388-amino-acid chain: Carbamoyl phosphate synthase small chain (388 aa).

A CPSase region spans residues 1-192 (MPLSDAMPAL…FNPDGTVKNG (192 aa)). L-glutamine is bound by residues Ser51, Gly244, and Gly246. The region spanning 196-382 (TVVALDFGVK…VHQMRTTKQA (187 aa)) is the Glutamine amidotransferase type-1 domain. Cys272 serves as the catalytic Nucleophile. The L-glutamine site is built by Met273, Gln276, Asn312, and Phe315. Residues His355 and Glu357 contribute to the active site.

Belongs to the CarA family. Composed of two chains; the small (or glutamine) chain promotes the hydrolysis of glutamine to ammonia, which is used by the large (or ammonia) chain to synthesize carbamoyl phosphate. Tetramer of heterodimers (alpha,beta)4.

It carries out the reaction hydrogencarbonate + L-glutamine + 2 ATP + H2O = carbamoyl phosphate + L-glutamate + 2 ADP + phosphate + 2 H(+). The catalysed reaction is L-glutamine + H2O = L-glutamate + NH4(+). Its pathway is amino-acid biosynthesis; L-arginine biosynthesis; carbamoyl phosphate from bicarbonate: step 1/1. It functions in the pathway pyrimidine metabolism; UMP biosynthesis via de novo pathway; (S)-dihydroorotate from bicarbonate: step 1/3. In terms of biological role, small subunit of the glutamine-dependent carbamoyl phosphate synthetase (CPSase). CPSase catalyzes the formation of carbamoyl phosphate from the ammonia moiety of glutamine, carbonate, and phosphate donated by ATP, constituting the first step of 2 biosynthetic pathways, one leading to arginine and/or urea and the other to pyrimidine nucleotides. The small subunit (glutamine amidotransferase) binds and cleaves glutamine to supply the large subunit with the substrate ammonia. This is Carbamoyl phosphate synthase small chain from Nostoc sp. (strain PCC 7120 / SAG 25.82 / UTEX 2576).